Consider the following 275-residue polypeptide: Lectin (275 aa).

The signal sequence occupies residues 1–30; the sequence is MASLQTQMISFYLIFLSILLTTIFFFKVNS. D-glucose-binding residues include Asp-111 and Gly-129. Mn(2+) contacts are provided by Glu-149 and Asp-151. Residues Asp-151, Phe-153, Asn-155, and Asp-159 each contribute to the Ca(2+) site. Residues Asp-159 and His-166 each contribute to the Mn(2+) site. Positions 211-217 are excised as a propeptide; it reads NSLEEEN. The D-glucose site is built by Gly-246 and Ala-247. Positions 270–275 are excised as a propeptide; it reads KQAADA.

It belongs to the leguminous lectin family. In terms of assembly, heterotetramer of two alpha and two beta chains. In terms of processing, the mature form consists of two chains, alpha and beta, produced by cleavage of the immature protein. These remain cleaved, yet fold together to form one subunit.

Its function is as follows. D-mannose specific lectin. The sequence is that of Lectin from Lens culinaris subsp. orientalis (Oriental wild lentil).